We begin with the raw amino-acid sequence, 381 residues long: ELMO domain-containing protein 3 (381 aa).

A disordered region spans residues 1-31 (MNEKSCSFHSKEELRDGQGERLSAGYSPSYD). Over residues 9 to 19 (HSKEELRDGQG) the composition is skewed to basic and acidic residues. An ELMO domain is found at 170 to 324 (VHGRVLQTIY…ELEVLAKKSP (155 aa)).

Both isoform 1 and isoform 6 are widely expressed.

It localises to the cell projection. The protein resides in the stereocilium. Its subcellular location is the kinocilium. It is found in the cytoplasm. The protein localises to the cytoskeleton. Functionally, acts as a GTPase-activating protein (GAP) for ARL2 with low specific activity. This chain is ELMO domain-containing protein 3 (ELMOD3), found in Homo sapiens (Human).